The chain runs to 472 residues: 3-isopropylmalate dehydratase large subunit (472 aa).

3 residues coordinate [4Fe-4S] cluster: cysteine 350, cysteine 411, and cysteine 414.

The protein belongs to the aconitase/IPM isomerase family. LeuC type 1 subfamily. As to quaternary structure, heterodimer of LeuC and LeuD. It depends on [4Fe-4S] cluster as a cofactor.

It catalyses the reaction (2R,3S)-3-isopropylmalate = (2S)-2-isopropylmalate. Its pathway is amino-acid biosynthesis; L-leucine biosynthesis; L-leucine from 3-methyl-2-oxobutanoate: step 2/4. In terms of biological role, catalyzes the isomerization between 2-isopropylmalate and 3-isopropylmalate, via the formation of 2-isopropylmaleate. This is 3-isopropylmalate dehydratase large subunit from Alcanivorax borkumensis (strain ATCC 700651 / DSM 11573 / NCIMB 13689 / SK2).